The sequence spans 251 residues: Auxin-responsive protein IAA29 (251 aa).

Positions 3-7 (LDLGL) match the EAR-like (transcriptional repression) motif. A PB1 domain is found at 159–246 (SMYVKVKMDG…SIIRDRPCAY (88 aa)).

The protein belongs to the Aux/IAA family. Homodimers and heterodimers.

The protein localises to the nucleus. Functionally, aux/IAA proteins are short-lived transcriptional factors that function as repressors of early auxin response genes at low auxin concentrations. Repression is thought to result from the interaction with auxin response factors (ARFs), proteins that bind to the auxin-responsive promoter element (AuxRE). Formation of heterodimers with ARF proteins may alter their ability to modulate early auxin response genes expression. The polypeptide is Auxin-responsive protein IAA29 (IAA29) (Arabidopsis thaliana (Mouse-ear cress)).